The following is a 1414-amino-acid chain: DNA-directed RNA polymerase subunit beta' (1414 aa).

Zn(2+) contacts are provided by Cys-70, Cys-72, Cys-85, and Cys-88. Residues Asp-460, Asp-462, and Asp-464 each coordinate Mg(2+). Zn(2+)-binding residues include Cys-814, Cys-888, Cys-895, and Cys-898. Residues 1392-1403 (EQALSEALKSSA) are compositionally biased toward low complexity. The tract at residues 1392–1414 (EQALSEALKSSAPQEAKAAQKDE) is disordered.

Belongs to the RNA polymerase beta' chain family. The RNAP catalytic core consists of 2 alpha, 1 beta, 1 beta' and 1 omega subunit. When a sigma factor is associated with the core the holoenzyme is formed, which can initiate transcription. Mg(2+) is required as a cofactor. It depends on Zn(2+) as a cofactor.

The catalysed reaction is RNA(n) + a ribonucleoside 5'-triphosphate = RNA(n+1) + diphosphate. In terms of biological role, DNA-dependent RNA polymerase catalyzes the transcription of DNA into RNA using the four ribonucleoside triphosphates as substrates. The polypeptide is DNA-directed RNA polymerase subunit beta' (Coxiella burnetii (strain Dugway 5J108-111)).